A 249-amino-acid polypeptide reads, in one-letter code: Short-chain dehydrogenase virB (249 aa).

Positions 16, 104, 150, 154, 183, and 185 each coordinate NADP(+). Y150 functions as the Proton donor in the catalytic mechanism. Residue K154 is the Lowers pKa of active site Tyr of the active site.

This sequence belongs to the short-chain dehydrogenases/reductases (SDR) family.

It participates in secondary metabolite biosynthesis. Short-chain dehydrogenase; part of the gene cluster that mediates the biosynthesis of virensols and trichoxide, fungal natural products that contain or are derived from a salicylaldehyde core. The pathway begins with the synthesis of the reduced chain in virensol C by the highly reducing polyketide synthase virA via condensation of one acetate and 8 malonate units. VirA has interesting programming rules since the first 2 ketides are fully reduced, the 3 following ketides undergo beta-dehydration, and the last 3 ketides are only reduced to beta-hydroxys to yield the trihydroxy portion. The production of aldehyde virensol C by virA alone is surprising, since virA does not contain a reductase (R) domain that is typically associated with reductive product release in HRPKS. The cupin-domain enzyme virC is involved in enhancing virA product turnover. The short-chain dehydrogenase virB then oxidizes the C-7 alcohol of virensol C to a ketone, yielding virensol D. Virensol D is further transformed to salicylaldehyde 5-deoxyaurocitrin by the short-chain dehydrogenase virD. VirD catalyzes the dehydrogenation of C-3 to form the beta-ketone aldehyde, which is followed by the generation of the nucleophilic C-2 that is required for the intramolecular aldol condensation between C-2 and C-7, itself followed by dehydration and aromatization which leads to salicylaldehyde 5-deoxyaurocitrin. While the dehydrogenation of virensol D is definitely catalyzed by virD, the aldol condensation and dehydration may be uncatalyzed or assisted by virD. The short chain dehydrogenase virG then converts salicylaldehyde 5-deoxyaurocitrin into virensol B which is further hydroxylated by the cytochrome P450 monooxygenase virE to yield the hydroquinone virensol A. VirI then may oxidize virensol A to form the quinone, while virH performs the epoxidation. Finally, the two remaining short-chain dehydrogenases, virK and virL, are probably responsible for reducing the ketones to the corresponding alcohols to furnish the epoxycyclohexanol structure in trichoxide. The polypeptide is Short-chain dehydrogenase virB (Hypocrea virens (strain Gv29-8 / FGSC 10586) (Gliocladium virens)).